The sequence spans 322 residues: Adenine deaminase (322 aa).

Zn(2+) contacts are provided by His11, His13, and His189. Glu192 (proton donor) is an active-site residue. Zn(2+) is bound at residue Asp270. Asp271 contributes to the substrate binding site.

It belongs to the metallo-dependent hydrolases superfamily. Adenosine and AMP deaminases family. Adenine deaminase type 2 subfamily. Requires Zn(2+) as cofactor.

The enzyme catalyses adenine + H2O + H(+) = hypoxanthine + NH4(+). In terms of biological role, catalyzes the hydrolytic deamination of adenine to hypoxanthine. Plays an important role in the purine salvage pathway and in nitrogen catabolism. The chain is Adenine deaminase from Rhizobium johnstonii (strain DSM 114642 / LMG 32736 / 3841) (Rhizobium leguminosarum bv. viciae).